The primary structure comprises 211 residues: Thymidylate kinase (211 aa).

10–17 (GLDGSGKT) lines the ATP pocket.

The protein belongs to the thymidylate kinase family.

The catalysed reaction is dTMP + ATP = dTDP + ADP. Phosphorylation of dTMP to form dTDP in both de novo and salvage pathways of dTTP synthesis. This Blochmanniella floridana protein is Thymidylate kinase.